A 199-amino-acid chain; its full sequence is Probable nicotinate-nucleotide adenylyltransferase (199 aa).

Belongs to the NadD family.

It catalyses the reaction nicotinate beta-D-ribonucleotide + ATP + H(+) = deamido-NAD(+) + diphosphate. It participates in cofactor biosynthesis; NAD(+) biosynthesis; deamido-NAD(+) from nicotinate D-ribonucleotide: step 1/1. Its function is as follows. Catalyzes the reversible adenylation of nicotinate mononucleotide (NaMN) to nicotinic acid adenine dinucleotide (NaAD). The polypeptide is Probable nicotinate-nucleotide adenylyltransferase (Chloroherpeton thalassium (strain ATCC 35110 / GB-78)).